The sequence spans 355 residues: Peptide chain release factor 1 (355 aa).

Gln-233 bears the N5-methylglutamine mark.

This sequence belongs to the prokaryotic/mitochondrial release factor family. Post-translationally, methylated by PrmC. Methylation increases the termination efficiency of RF1.

Its subcellular location is the cytoplasm. Peptide chain release factor 1 directs the termination of translation in response to the peptide chain termination codons UAG and UAA. This Syntrophobacter fumaroxidans (strain DSM 10017 / MPOB) protein is Peptide chain release factor 1.